An 864-amino-acid chain; its full sequence is Xylosyltransferase 2 (864 aa).

The Cytoplasmic segment spans residues 1-15 (MVASARVQKLVRRYK). A helical; Signal-anchor for type II membrane protein membrane pass occupies residues 16 to 36 (LAIATALAILLLQGLVVWSFS). The Lumenal portion of the chain corresponds to 37–864 (GLEEDEPGEK…GPVKADGRLR (828 aa)). Disordered stretches follow at residues 39–123 (EEDE…RQNL) and 136–158 (AGFP…DNSF). Residues 53 to 65 (RPLDPGEGSKDTD) show a composition bias toward basic and acidic residues. Over residues 73-82 (SAGRRHGRWR) the composition is skewed to basic residues. The N-linked (GlcNAc...) asparagine glycan is linked to Asn-122. Intrachain disulfides connect Cys-162-Cys-190, Cys-206-Cys-448, Cys-467-Cys-480, and Cys-469-Cys-478. Residues Val-239, Asp-267, and 296-298 (TIW) each bind UDP-alpha-D-xylose. An N-linked (GlcNAc...) asparagine glycan is attached at Asn-327. Residue 400 to 401 (DW) coordinates UDP-alpha-D-xylose. UDP-alpha-D-xylose-binding positions include Ser-481 and 504–505 (RK). Disulfide bonds link Cys-580–Cys-832 and Cys-825–Cys-838. Residue Asn-682 is glycosylated (N-linked (GlcNAc...) asparagine).

Belongs to the glycosyltransferase 14 family. XylT subfamily. Monomer. Mg(2+) serves as cofactor. Mn(2+) is required as a cofactor. Post-translationally, contains disulfide bonds.

It is found in the golgi apparatus membrane. The protein resides in the secreted. It catalyses the reaction UDP-alpha-D-xylose + L-seryl-[protein] = 3-O-(beta-D-xylosyl)-L-seryl-[protein] + UDP + H(+). It functions in the pathway glycan metabolism; chondroitin sulfate biosynthesis. The protein operates within glycan metabolism; heparan sulfate biosynthesis. In terms of biological role, catalyzes the first step in the biosynthesis of chondroitin sulfate, heparan sulfate and dermatan sulfate proteoglycans, such as DCN. Transfers D-xylose from UDP-D-xylose to specific serine residues of the core protein. In Rattus norvegicus (Rat), this protein is Xylosyltransferase 2 (Xylt2).